A 189-amino-acid polypeptide reads, in one-letter code: Sec-independent protein translocase protein TatB (189 aa).

Residues 1–21 (MFGVGIFEVLVILIVAVIALG) form a helical membrane-spanning segment. The tract at residues 152–189 (TQKPQNSIDSINSKESSVDSLHSPSIVESTQSSSSKDS) is disordered. Residues 153-189 (QKPQNSIDSINSKESSVDSLHSPSIVESTQSSSSKDS) are compositionally biased toward polar residues.

It belongs to the TatB family. The Tat system comprises two distinct complexes: a TatABC complex, containing multiple copies of TatA, TatB and TatC subunits, and a separate TatA complex, containing only TatA subunits. Substrates initially bind to the TatABC complex, which probably triggers association of the separate TatA complex to form the active translocon.

It localises to the cell inner membrane. In terms of biological role, part of the twin-arginine translocation (Tat) system that transports large folded proteins containing a characteristic twin-arginine motif in their signal peptide across membranes. Together with TatC, TatB is part of a receptor directly interacting with Tat signal peptides. TatB may form an oligomeric binding site that transiently accommodates folded Tat precursor proteins before their translocation. This chain is Sec-independent protein translocase protein TatB, found in Helicobacter hepaticus (strain ATCC 51449 / 3B1).